A 166-amino-acid polypeptide reads, in one-letter code: Interferon gamma (166 aa).

An N-terminal signal peptide occupies residues 1–23; the sequence is MNYTSFILAFQLCAILGSSTYYC. At glutamine 24 the chain carries Pyrrolidone carboxylic acid. 2 N-linked (GlcNAc...) asparagine glycosylation sites follow: asparagine 39 and asparagine 106. A disordered region spans residues 147–166; the sequence is ANLRKRKRSQNPFRGRRALQ. Positions 148-166 are enriched in basic residues; sequence NLRKRKRSQNPFRGRRALQ.

It belongs to the type II (or gamma) interferon family. In terms of assembly, homodimer. Interacts with IFNGR1 (via extracellular domain); this interaction promotes IFNGR1 dimerization. As to expression, released primarily from activated T lymphocytes.

Its subcellular location is the secreted. In terms of biological role, type II interferon produced by immune cells such as T-cells and NK cells that plays crucial roles in antimicrobial, antiviral, and antitumor responses by activating effector immune cells and enhancing antigen presentation. Primarily signals through the JAK-STAT pathway after interaction with its receptor IFNGR1 to affect gene regulation. Upon IFNG binding, IFNGR1 intracellular domain opens out to allow association of downstream signaling components JAK2, JAK1 and STAT1, leading to STAT1 activation, nuclear translocation and transcription of IFNG-regulated genes. Many of the induced genes are transcription factors such as IRF1 that are able to further drive regulation of a next wave of transcription. Plays a role in class I antigen presentation pathway by inducing a replacement of catalytic proteasome subunits with immunoproteasome subunits. In turn, increases the quantity, quality, and repertoire of peptides for class I MHC loading. Increases the efficiency of peptide generation also by inducing the expression of activator PA28 that associates with the proteasome and alters its proteolytic cleavage preference. Up-regulates as well MHC II complexes on the cell surface by promoting expression of several key molecules such as cathepsins B/CTSB, H/CTSH, and L/CTSL. Participates in the regulation of hematopoietic stem cells during development and under homeostatic conditions by affecting their development, quiescence, and differentiation. The chain is Interferon gamma (IFNG) from Equus asinus (Donkey).